The sequence spans 337 residues: MEEIERIREIERTEQEKIKERIKLQREKEKEEELDKYTVECPECGSRALVRDYERAELVCSECGLVIDENFIDQGPEWRAFDHDQRMKRSRVGAPMTYTIHDKGLSTMIDWRNRDSYGKTISSKNRAQLYRLRKWQRRIRVSNATERNLAFALSELDRMASALGLSRNVRETAAVIYRRAVEKNLIRGRSIEGVAAAALYAACRQCNVPRTLDEIAEVSRVSRKEIGRTYRFVSRELSLKLMPTSPIDYIPRFCSGLNLKGDVQAKGIEILRQAAEKELTSGRGPTGVAAAAIYIASILCNDRRTQREVADVAGVTEVTIRNRYKELAEELNIEIIL.

Residues 37 to 68 (YTVECPECGSRALVRDYERAELVCSECGLVID) form a TFIIB-type zinc finger. 4 residues coordinate Zn(2+): C41, C44, C60, and C63. 2 repeat units span residues 154-237 (SELD…SREL) and 248-329 (DYIP…ELAE).

It belongs to the TFIIB family.

Stabilizes TBP binding to an archaeal box-A promoter. Also responsible for recruiting RNA polymerase II to the pre-initiation complex (DNA-TBP-TFIIB). The polypeptide is Transcription initiation factor IIB (Methanothrix thermoacetophila (strain DSM 6194 / JCM 14653 / NBRC 101360 / PT) (Methanosaeta thermophila)).